A 119-amino-acid polypeptide reads, in one-letter code: Large ribosomal subunit protein uL18 (119 aa).

The protein belongs to the universal ribosomal protein uL18 family. As to quaternary structure, part of the 50S ribosomal subunit; part of the 5S rRNA/L5/L18/L25 subcomplex. Contacts the 5S and 23S rRNAs.

In terms of biological role, this is one of the proteins that bind and probably mediate the attachment of the 5S RNA into the large ribosomal subunit, where it forms part of the central protuberance. The chain is Large ribosomal subunit protein uL18 from Endomicrobium trichonymphae.